A 278-amino-acid chain; its full sequence is Indole-3-glycerol phosphate synthase (278 aa).

This sequence belongs to the TrpC family.

The enzyme catalyses 1-(2-carboxyphenylamino)-1-deoxy-D-ribulose 5-phosphate + H(+) = (1S,2R)-1-C-(indol-3-yl)glycerol 3-phosphate + CO2 + H2O. Its pathway is amino-acid biosynthesis; L-tryptophan biosynthesis; L-tryptophan from chorismate: step 4/5. This chain is Indole-3-glycerol phosphate synthase, found in Pseudomonas fluorescens (strain ATCC BAA-477 / NRRL B-23932 / Pf-5).